Here is a 547-residue protein sequence, read N- to C-terminus: CTP synthase (547 aa).

Residues methionine 1–isoleucine 265 are amidoligase domain. Residue serine 13 participates in CTP binding. Serine 13 is a UTP binding site. ATP is bound by residues serine 14 to leucine 19 and aspartate 71. Mg(2+)-binding residues include aspartate 71 and glutamate 139. CTP contacts are provided by residues aspartate 146–glutamate 148, lysine 186–glutamine 191, and lysine 222. Residues lysine 186–glutamine 191 and lysine 222 contribute to the UTP site. The Glutamine amidotransferase type-1 domain maps to lysine 291–leucine 546. Glycine 353 is a binding site for L-glutamine. Cysteine 380 (nucleophile; for glutamine hydrolysis) is an active-site residue. Residues leucine 381–glutamine 384, glutamate 404, and arginine 474 contribute to the L-glutamine site. Residues histidine 519 and glutamate 521 contribute to the active site.

This sequence belongs to the CTP synthase family. Homotetramer.

The catalysed reaction is UTP + L-glutamine + ATP + H2O = CTP + L-glutamate + ADP + phosphate + 2 H(+). It catalyses the reaction L-glutamine + H2O = L-glutamate + NH4(+). It carries out the reaction UTP + NH4(+) + ATP = CTP + ADP + phosphate + 2 H(+). Its pathway is pyrimidine metabolism; CTP biosynthesis via de novo pathway; CTP from UDP: step 2/2. Its activity is regulated as follows. Allosterically activated by GTP, when glutamine is the substrate; GTP has no effect on the reaction when ammonia is the substrate. The allosteric effector GTP functions by stabilizing the protein conformation that binds the tetrahedral intermediate(s) formed during glutamine hydrolysis. Inhibited by the product CTP, via allosteric rather than competitive inhibition. In terms of biological role, catalyzes the ATP-dependent amination of UTP to CTP with either L-glutamine or ammonia as the source of nitrogen. Regulates intracellular CTP levels through interactions with the four ribonucleotide triphosphates. The protein is CTP synthase of Roseobacter denitrificans (strain ATCC 33942 / OCh 114) (Erythrobacter sp. (strain OCh 114)).